The primary structure comprises 731 residues: 1,4-alpha-glucan branching enzyme GlgB (731 aa).

Asp412 (nucleophile) is an active-site residue. Glu465 acts as the Proton donor in catalysis.

It belongs to the glycosyl hydrolase 13 family. GlgB subfamily. Monomer.

The enzyme catalyses Transfers a segment of a (1-&gt;4)-alpha-D-glucan chain to a primary hydroxy group in a similar glucan chain.. It functions in the pathway glycan biosynthesis; glycogen biosynthesis. Catalyzes the formation of the alpha-1,6-glucosidic linkages in glycogen by scission of a 1,4-alpha-linked oligosaccharide from growing alpha-1,4-glucan chains and the subsequent attachment of the oligosaccharide to the alpha-1,6 position. The chain is 1,4-alpha-glucan branching enzyme GlgB from Bordetella pertussis (strain Tohama I / ATCC BAA-589 / NCTC 13251).